Reading from the N-terminus, the 1238-residue chain is Lysine-specific demethylase JMJ703 (1238 aa).

The disordered stretch occupies residues 56–79 (EECQPSAAVSRSDTPCSTSGTQTC). Residues 62-79 (AAVSRSDTPCSTSGTQTC) show a composition bias toward polar residues. One can recognise a JmjN domain in the interval 154–195 (APVFYPTEEEFEDTLKYIESIRPMAEPYGICRIVPPSSWKPP). Positions 215 to 266 (KVDKLQNRKSSKKGRRGGMMKRRKLAESEENSATAHTQTGMQQSPERFGFEP) are disordered. Basic residues predominate over residues 221-238 (NRKSSKKGRRGGMMKRRK). Polar residues predominate over residues 245–259 (NSATAHTQTGMQQSP). One can recognise a JmjC domain in the interval 348–514 (KYAQSGWNLN…IGHNAVELYR (167 aa)). Fe cation-binding residues include H394, E396, and H482. 4 disordered regions span residues 699 to 725 (GPRRSYMSQASAVSLVSSSTSNEQKDE), 777 to 798 (YNGGLGGHKGSAPGLPVSSSPS), 834 to 863 (TGDSRSLLGEHHNRSPAMIHDGTNMKSSLE), and 910 to 978 (ASSQ…LQRT). The span at 706–719 (SQASAVSLVSSSTS) shows a compositional bias: low complexity. The segment covering 910–923 (ASSQQFVRTGPWTQ) has biased composition (polar residues). The span at 924–936 (SASHEASSPSTSA) shows a compositional bias: low complexity. Residues 964-978 (SFSNQQPNDGRLQRT) show a composition bias toward polar residues. The FYR N-terminal domain maps to 1019–1077 (VVHRFKCSVEPLEIGVVLSGRLWSSSQAIFPKGFRSRVKYFSIVDPIQMAYYISEILDA). Residues 1079–1169 (MQGPLFMVKL…HICTEYWRSR (91 aa)) enclose the FYR C-terminal domain.

Fe(2+) is required as a cofactor. Expressed in roots, leaf sheaths, stems and panicles.

The protein localises to the nucleus. It catalyses the reaction N(6),N(6),N(6)-trimethyl-L-lysyl(4)-[histone H3] + 3 2-oxoglutarate + 3 O2 = L-lysyl(4)-[histone H3] + 3 formaldehyde + 3 succinate + 3 CO2. Histone demethylase that demethylates 'Lys-4' (H3K4me) of histone H3 with a specific activity for H3K4me3, H3K4me2 and H3K4me1. No activity on H3K9me3/2/1, H3K27me3/2/1 and H3K36me3/2/1. Involved in the control of stem elongation by regulating methylation states of H3K4me3 on cytokinin oxidase (CKX) gene family, which may cause increased expression of CKX genes and reduced cytokinin levels. Prevents ectopic retrotransposition by regulating the levels of H3K4me3 in two non-LTR retrotransposons KARMA and LINE-1 (L1) and reinforcing their repressed states. The polypeptide is Lysine-specific demethylase JMJ703 (JMJ703) (Oryza sativa subsp. japonica (Rice)).